Consider the following 521-residue polypeptide: Tubulin-specific chaperone E (521 aa).

Positions 24–68 (GPVPPTAGVWLGVEWDHPERGKHDGSHDGVRYFTCRHPTGGSFVR) constitute a CAP-Gly domain. 7 LRR repeats span residues 147–168 (FVQS…AAIT), 173–194 (SLQE…SSLS), 199–220 (HLRV…HCAP), 224–245 (QVEE…EHVL), 247–268 (ALTV…EISH), 271–292 (RLER…DVPA), and 301–322 (ALKE…NELE). The LRRCT domain occupies 335–377 (NPLLHKEKNLETARQIMIARLGQLELLDMRQILSDERRGAELD).

This sequence belongs to the TBCE family. In terms of assembly, supercomplex made of cofactors A to E. Cofactors A and D function by capturing and stabilizing tubulin in a quasi-native conformation. Cofactor E binds to the cofactor D-tubulin complex; interaction with cofactor C then causes the release of tubulin polypeptides that are committed to the native state.

Its subcellular location is the cytoplasm. The protein resides in the cytoskeleton. Tubulin-folding protein; involved in the second step of the tubulin folding pathway. This is Tubulin-specific chaperone E (tbce) from Danio rerio (Zebrafish).